Consider the following 162-residue polypeptide: Flagellar assembly factor FliW (162 aa).

This sequence belongs to the FliW family. In terms of assembly, interacts with translational regulator CsrA and flagellin(s).

The protein resides in the cytoplasm. Functionally, acts as an anti-CsrA protein, binds CsrA and prevents it from repressing translation of its target genes, one of which is flagellin. Binds to flagellin and participates in the assembly of the flagellum. In Magnetococcus marinus (strain ATCC BAA-1437 / JCM 17883 / MC-1), this protein is Flagellar assembly factor FliW.